The sequence spans 113 residues: Large ribosomal subunit protein uL24 (113 aa).

The protein belongs to the universal ribosomal protein uL24 family. Part of the 50S ribosomal subunit.

One of two assembly initiator proteins, it binds directly to the 5'-end of the 23S rRNA, where it nucleates assembly of the 50S subunit. Its function is as follows. One of the proteins that surrounds the polypeptide exit tunnel on the outside of the subunit. This is Large ribosomal subunit protein uL24 from Rickettsia prowazekii (strain Madrid E).